A 210-amino-acid chain; its full sequence is Dynactin-associated protein (210 aa).

The Cytoplasmic segment spans residues Met1–Lys113. A helical; Signal-anchor for type II membrane protein transmembrane segment spans residues Val114–Cys134. The Extracellular segment spans residues Leu135 to Leu210. A disordered region spans residues Ala168 to Leu210. The span at Pro171 to Thr203 shows a compositional bias: low complexity.

In terms of assembly, interacts with DCTN1 and DCTN2. As to expression, expressed in fibroblast and numerous cancer cell lines (at protein level).

The protein localises to the golgi apparatus membrane. The protein resides in the cell membrane. Its function is as follows. Plays a role in the regulation of cell proliferation. Promotes activation of the AKT1 signaling pathway. Promotes phosphorylation of AKT1 at 'Ser-473'. This is Dynactin-associated protein (DYNAP) from Homo sapiens (Human).